Reading from the N-terminus, the 213-residue chain is Orotate phosphoribosyltransferase (213 aa).

Position 26 (Lys-26) interacts with 5-phospho-alpha-D-ribose 1-diphosphate. Residue 34-35 (FF) participates in orotate binding. 5-phospho-alpha-D-ribose 1-diphosphate contacts are provided by residues 72–73 (YK), Arg-99, Lys-100, Lys-103, His-105, and 124–132 (DDVITAGTA). Orotate is bound by residues Thr-128 and Arg-156.

The protein belongs to the purine/pyrimidine phosphoribosyltransferase family. PyrE subfamily. As to quaternary structure, homodimer. The cofactor is Mg(2+).

It carries out the reaction orotidine 5'-phosphate + diphosphate = orotate + 5-phospho-alpha-D-ribose 1-diphosphate. Its pathway is pyrimidine metabolism; UMP biosynthesis via de novo pathway; UMP from orotate: step 1/2. In terms of biological role, catalyzes the transfer of a ribosyl phosphate group from 5-phosphoribose 1-diphosphate to orotate, leading to the formation of orotidine monophosphate (OMP). The polypeptide is Orotate phosphoribosyltransferase (Serratia proteamaculans (strain 568)).